The sequence spans 87 residues: Type 3 secretion system needle filament protein (87 aa).

Belongs to the SctF family. In terms of assembly, the core secretion machinery of the T3SS is composed of approximately 20 different proteins, including cytoplasmic components, a base, an export apparatus and a needle. This subunit polymerizes and forms the helical needle filament. In Y.enterocolitica E40, the needles are composed of 139 (plus-minus 19) YscF/SctF subunits.

The protein resides in the secreted. It localises to the cell surface. Its activity is regulated as follows. The secretion and/or polymerization may be controlled by the type III secretion system regulator YopR. Its function is as follows. Component of the type III secretion system (T3SS), also called injectisome, which is used to inject bacterial effector proteins into eukaryotic host cells. YscF/SctF forms the external needle filament that protrudes from the bacterial surface. The needle is not sufficient by itself for the formation of a pore allowing translocation of the Yop effectors across the host cell membrane. In Yersinia enterocolitica, this protein is Type 3 secretion system needle filament protein.